The chain runs to 396 residues: Acetate kinase (396 aa).

A Mg(2+)-binding site is contributed by Asn6. Residue Lys13 coordinates ATP. Arg89 contacts substrate. Asp145 acts as the Proton donor/acceptor in catalysis. ATP contacts are provided by residues 205–209, 280–282, and 329–333; these read HLGNG, DMR, and GVGEN. Glu383 is a Mg(2+) binding site.

It belongs to the acetokinase family. As to quaternary structure, homodimer. Mg(2+) is required as a cofactor. It depends on Mn(2+) as a cofactor.

It is found in the cytoplasm. It carries out the reaction acetate + ATP = acetyl phosphate + ADP. It functions in the pathway metabolic intermediate biosynthesis; acetyl-CoA biosynthesis; acetyl-CoA from acetate: step 1/2. Its function is as follows. Catalyzes the formation of acetyl phosphate from acetate and ATP. Can also catalyze the reverse reaction. The chain is Acetate kinase from Mesoplasma florum (strain ATCC 33453 / NBRC 100688 / NCTC 11704 / L1) (Acholeplasma florum).